The sequence spans 770 residues: tRNA(Met) cytidine acetyltransferase TmcA 2 (770 aa).

Positions 209 and 390 each coordinate ATP. Residues 458–608 (MIMLDGIHHK…YPVVVIRPIS (151 aa)) form the N-acetyltransferase domain. 533-535 (IAV) contributes to the acetyl-CoA binding site.

Belongs to the TmcA family.

It is found in the cytoplasm. It carries out the reaction cytidine(34) in elongator tRNA(Met) + acetyl-CoA + ATP + H2O = N(4)-acetylcytidine(34) in elongator tRNA(Met) + ADP + phosphate + CoA + H(+). The enzyme catalyses a cytidine in RNA + acetyl-CoA + ATP + H2O = an N(4)-acetylcytidine in RNA + ADP + phosphate + CoA + H(+). The catalysed reaction is a cytidine in tRNA + acetyl-CoA + ATP + H2O = an N(4)-acetylcytidine in tRNA + ADP + phosphate + CoA + H(+). It catalyses the reaction a cytidine in mRNA + acetyl-CoA + ATP + H2O = an N(4)-acetylcytidine in mRNA + ADP + phosphate + CoA + H(+). Functionally, catalyzes the formation of N(4)-acetylcytidine (ac(4)C) at the wobble position of tRNA(Met), by using acetyl-CoA as an acetyl donor and ATP (or GTP). In terms of biological role, catalyzes the formation of 41 N(4)-acetylcytidine (ac(4)C) sites in RNA, almost always on the middle C of a CCG motif. Modifications are found mostly in tRNA, with small amounts found in rRNA and mRNA. The chain is tRNA(Met) cytidine acetyltransferase TmcA 2 from Saccharolobus solfataricus (strain ATCC 35092 / DSM 1617 / JCM 11322 / P2) (Sulfolobus solfataricus).